The sequence spans 425 residues: UPF0597 protein Swoo_4889 (425 aa).

Belongs to the UPF0597 family.

The protein is UPF0597 protein Swoo_4889 of Shewanella woodyi (strain ATCC 51908 / MS32).